Here is a 246-residue protein sequence, read N- to C-terminus: UDP-N-acetyl-D-mannosaminuronic acid transferase (246 aa).

The protein belongs to the glycosyltransferase 26 family.

It catalyses the reaction UDP-N-acetyl-alpha-D-mannosaminouronate + N-acetyl-alpha-D-glucosaminyl-di-trans,octa-cis-undecaprenyl diphosphate = beta-D-ManNAcA-(1-&gt;4)-alpha-D-GlcNAc-di-trans,octa-cis-undecaprenyl diphosphate + UDP + H(+). It participates in bacterial outer membrane biogenesis; enterobacterial common antigen biosynthesis. Its function is as follows. Catalyzes the synthesis of Und-PP-GlcNAc-ManNAcA (Lipid II), the second lipid-linked intermediate involved in enterobacterial common antigen (ECA) synthesis. The protein is UDP-N-acetyl-D-mannosaminuronic acid transferase of Escherichia coli (strain K12).